The primary structure comprises 215 residues: Methylthioribulose-1-phosphate dehydratase (215 aa).

Zn(2+)-binding residues include His-103 and His-105.

This sequence belongs to the aldolase class II family. MtnB subfamily. It depends on Zn(2+) as a cofactor.

The enzyme catalyses 5-(methylsulfanyl)-D-ribulose 1-phosphate = 5-methylsulfanyl-2,3-dioxopentyl phosphate + H2O. Its pathway is amino-acid biosynthesis; L-methionine biosynthesis via salvage pathway; L-methionine from S-methyl-5-thio-alpha-D-ribose 1-phosphate: step 2/6. Functionally, catalyzes the dehydration of methylthioribulose-1-phosphate (MTRu-1-P) into 2,3-diketo-5-methylthiopentyl-1-phosphate (DK-MTP-1-P). This Persephonella marina (strain DSM 14350 / EX-H1) protein is Methylthioribulose-1-phosphate dehydratase.